The primary structure comprises 1053 residues: Prestalk protein (1053 aa).

An N-terminal signal peptide occupies residues 1–18 (MNKIYLILILFTFVGIIL). An X-1 repeat occupies 38–60 (NKCTLDKCNNGCCSNTPININDN). Residues 38–1019 (NKCTLDKCNN…VHTPVDCNDN (982 aa)) are 41 X 24 AA tandem repeats, Cys-rich. An X-2 repeat occupies 61 to 84 (DECTVDTCNPKTGISHTPVNCDDG). Residues 85–108 (NSCTADSCLCGKGCQHVPIACDDN) form an X-3 repeat. Residues 109 to 132 (NACTVDSCSNSTGCCHTPLSCDDN) form an A-1 repeat. The A-2 repeat unit spans residues 133–156 (NPCTVDSCSNSTGCCHTPINVDDH). The stretch at 157–180 (NACTEDKCTQSGGVTHTPIACDDK) is one B-1 repeat. Residues 181–204 (NACTVDSCSNSTGCCHTPLSCDDN) form an A-3 repeat. Residues 205 to 228 (NACTVDSCSNSTGCVHTPINVDDH) form an A-4 repeat. Residues 229-252 (NACTEDKCTQSGGVTHTPIACDDK) form a B-2 repeat. The A-5 repeat unit spans residues 253–276 (NACTADSCSNSTGCCHTPITCDDN). One copy of the A-6 repeat lies at 277–300 (NACTVDSCSNSTGCCHTPINVDDN). A B-3 repeat occupies 301-324 (NACTEDKCTQSGGVTHTPIACDDK). The stretch at 325–348 (NACTVDSCSNSTGCVHTPLACDDK) is one A-7 repeat. One copy of the A-8 repeat lies at 349 to 372 (NPCTVDSCSNSTGCCHTPINVDDN). The stretch at 373 to 396 (NACTEDKCTQSGGVTHTPINCDDN) is one B-4 repeat. Residues 397-420 (NKCTVDSCSNSTGCCHTPMSCDDN) form an A-9 repeat. An A-10 repeat occupies 421-444 (NPCTVDSCSNSTGCVHTPINVDDN). Residues 445 to 468 (NACTEDKCTQNGGVTHTPIACDDK) form a B-5 repeat. An A-11 repeat occupies 469 to 492 (NACTVDSCSNSTGCCHTPLKCDDN). The stretch at 493 to 516 (NACTVDSCSNSTGCVHTPINVDDN) is one A-12 repeat. The stretch at 517–540 (NACTEDKCTQSGGVTHTPISCDDK) is one B-6 repeat. The A-13 repeat unit spans residues 541-564 (NPCTIDSCSNSTGCVHTPMSCDDR). The X-4 repeat unit spans residues 565-588 (NPCTSDFCSWEKGCQHVALSCNDF). One copy of the A-14 repeat lies at 589–612 (NACTMDSCSNSTGCTHTPIACDDK). An A-15 repeat occupies 613–636 (NACTVDSCSNSTGCVHTPLTCDDN). The stretch at 637–660 (NPCTVDSCSNSTGCCHTPINVDDH) is one A-16 repeat. A B-7 repeat occupies 661 to 684 (NACTEDKCTQSGGVTHTPIACDDK). Residues 685–708 (NACTVDSCSNSTGCCHTPLSCDDN) form an A-17 repeat. An A-18 repeat occupies 709 to 732 (NACTVDSCSNSTGCVHTPINVDDN). The stretch at 733-756 (NACTEDKCTQNGGVTHTPIACDDK) is one B-8 repeat. The A-19 repeat unit spans residues 757 to 780 (NACTVDSCSNSTGCCHTPLKCDDN). Residues 781 to 804 (NPCTVDSCSNSTGCVHTPMNVDDN) form an A-20 repeat. One copy of the B-9 repeat lies at 805 to 828 (NACTEDKCTQNGGVTHTPIRCDDL). The stretch at 829-852 (NSCTADSCSNSTGCVHTPINCDDN) is one A-21 repeat. One copy of the A-22 repeat lies at 853 to 876 (NKCTADSCSNSTGCCHTPISCDDN). An A-23 repeat occupies 877 to 900 (NPCTVDSCSNSTGCCHTPINVDDN). The stretch at 901–924 (NPCTEDKCTQSGGVTHTPIGCNDN) is one B-10 repeat. An A-24 repeat occupies 925–948 (NACTVDSCSNSTGCTHTPMKCDDN). The stretch at 949–971 (NPCTIDSCSNSTGCVHTPMNCDD) is one A-25 repeat. An A-26 repeat occupies 972–995 (GNFCTLDSCCSTGCTHTPIIIDDN). An A-27 repeat occupies 996–1019 (NPCTVDSCCNSTGVVHTPVDCNDN).

It localises to the secreted. The protein localises to the extracellular space. It is found in the extracellular matrix. Component of the stalk tube, the matrix that encases stalk cells. This Dictyostelium discoideum (Social amoeba) protein is Prestalk protein (ecmB).